Reading from the N-terminus, the 289-residue chain is 3-methyl-2-oxobutanoate hydroxymethyltransferase (289 aa).

Over residues 1-15 the composition is skewed to polar residues; it reads MSTTFKLDTSTSRAN. Residues 1 to 21 are disordered; it reads MSTTFKLDTSTSRANPTPAPM. Positions 67 and 106 each coordinate Mg(2+). 3-methyl-2-oxobutanoate-binding positions include 67-68, Asp106, and Lys136; that span reads DS. Position 138 (Glu138) interacts with Mg(2+). Catalysis depends on Glu205, which acts as the Proton acceptor.

It belongs to the PanB family. In terms of assembly, homodecamer; pentamer of dimers. Requires Mg(2+) as cofactor.

The protein resides in the cytoplasm. It catalyses the reaction 3-methyl-2-oxobutanoate + (6R)-5,10-methylene-5,6,7,8-tetrahydrofolate + H2O = 2-dehydropantoate + (6S)-5,6,7,8-tetrahydrofolate. It participates in cofactor biosynthesis; (R)-pantothenate biosynthesis; (R)-pantoate from 3-methyl-2-oxobutanoate: step 1/2. Its function is as follows. Catalyzes the reversible reaction in which hydroxymethyl group from 5,10-methylenetetrahydrofolate is transferred onto alpha-ketoisovalerate to form ketopantoate. This Erythrobacter litoralis (strain HTCC2594) protein is 3-methyl-2-oxobutanoate hydroxymethyltransferase.